The sequence spans 152 residues: UPF0311 protein blr7842 (152 aa).

This sequence belongs to the UPF0311 family.

The chain is UPF0311 protein blr7842 from Bradyrhizobium diazoefficiens (strain JCM 10833 / BCRC 13528 / IAM 13628 / NBRC 14792 / USDA 110).